Consider the following 501-residue polypeptide: Glycerol kinase (501 aa).

Threonine 16 provides a ligand contact to ADP. ATP is bound by residues threonine 16, threonine 17, and serine 18. Position 16 (threonine 16) interacts with sn-glycerol 3-phosphate. Arginine 20 is an ADP binding site. Arginine 84, glutamate 85, tyrosine 135, and aspartate 242 together coordinate sn-glycerol 3-phosphate. Glycerol is bound by residues arginine 84, glutamate 85, tyrosine 135, aspartate 242, and glutamine 243. Residues threonine 264 and glycine 307 each contribute to the ADP site. ATP is bound by residues threonine 264, glycine 307, glutamine 311, and glycine 408. Glycine 408 contributes to the ADP binding site.

It belongs to the FGGY kinase family.

It catalyses the reaction glycerol + ATP = sn-glycerol 3-phosphate + ADP + H(+). Its pathway is polyol metabolism; glycerol degradation via glycerol kinase pathway; sn-glycerol 3-phosphate from glycerol: step 1/1. Functionally, key enzyme in the regulation of glycerol uptake and metabolism. Catalyzes the phosphorylation of glycerol to yield sn-glycerol 3-phosphate. This is Glycerol kinase from Saccharolobus islandicus (strain L.S.2.15 / Lassen #1) (Sulfolobus islandicus).